Consider the following 466-residue polypeptide: A-type ATP synthase subunit B (466 aa).

Belongs to the ATPase alpha/beta chains family. Has multiple subunits with at least A(3), B(3), C, D, E, F, H, I and proteolipid K(x).

It is found in the cell membrane. Its function is as follows. Component of the A-type ATP synthase that produces ATP from ADP in the presence of a proton gradient across the membrane. The B chain is a regulatory subunit. This Sulfolobus acidocaldarius (strain ATCC 33909 / DSM 639 / JCM 8929 / NBRC 15157 / NCIMB 11770) protein is A-type ATP synthase subunit B.